We begin with the raw amino-acid sequence, 890 residues long: Leucine-rich repeat receptor-like tyrosine-protein kinase PXC3 (890 aa).

The signal sequence occupies residues 1–23 (MTFWCMSILLIVGFLSKSELCEA). The Extracellular segment spans residues 24–534 (QLSDEATLVA…LRYNHRVSYR (511 aa)). Residues Asn-46, Asn-61, Asn-78, and Asn-108 are each glycosylated (N-linked (GlcNAc...) asparagine). LRR repeat units lie at residues 67–85 (MLDL…ISDL), 86–108 (RSLK…SFGN), 110–132 (SELE…EFGK), 133–157 (LRGL…LKVL), 159–181 (RLEE…VGNL), 182–205 (SSLR…LGLV), 206–229 (SELE…IFEK), 231–254 (KLKV…GICS), 256–276 (LSSI…TIGN), 278–300 (SGLT…EFSK), 301–325 (CSNL…LGQL), 326–349 (INLQ…FLGS), 350–373 (GNLN…LCSM), 375–397 (RLQY…IGNC), 399–421 (KLLQ…IGRM), 422–446 (RNLQ…LGKL), 447–469 (DKLV…LLKG), and 471–492 (MSLI…VFVP). Residues Asn-140, Asn-171, and Asn-180 are each glycosylated (N-linked (GlcNAc...) asparagine). N-linked (GlcNAc...) asparagine glycosylation is found at Asn-276, Asn-289, and Asn-303. The N-linked (GlcNAc...) asparagine glycan is linked to Asn-363. The N-linked (GlcNAc...) asparagine glycan is linked to Asn-429. Asn-477 and Asn-498 each carry an N-linked (GlcNAc...) asparagine glycan. A helical transmembrane segment spans residues 535–555 (IVLAVIGSGVAVFVSVTVVVL). Residues 556–890 (LFMMREKQEK…EMLQEVKQIK (335 aa)) lie on the Cytoplasmic side of the membrane. In terms of domain architecture, Protein kinase spans 608–886 (MKESNKLSTG…KKVVEMLQEV (279 aa)). Residues 614–622 (LSTGTFSSV) and Lys-636 each bind ATP. The active-site Proton acceptor is the Asp-735.

Belongs to the protein kinase superfamily. Tyr protein kinase family. Expressed in the vascular strands of cotyledons, the shoot apex, hypocotyls, roots, leaves, stems and flowers.

The protein localises to the cell membrane. It carries out the reaction L-tyrosyl-[protein] + ATP = O-phospho-L-tyrosyl-[protein] + ADP + H(+). Functionally, leucine-rich repeat receptor-like protein kinase that may play a role in vascular tissues development. The protein is Leucine-rich repeat receptor-like tyrosine-protein kinase PXC3 of Arabidopsis thaliana (Mouse-ear cress).